The primary structure comprises 339 residues: Dihydroorotate dehydrogenase (quinone) (339 aa).

FMN-binding positions include 64–68 (AGADK) and Thr-88. Lys-68 serves as a coordination point for substrate. 113–117 (NRNGF) lines the substrate pocket. FMN contacts are provided by Asn-141 and Asn-174. Substrate is bound at residue Asn-174. Residue Ser-177 is the Nucleophile of the active site. Asn-179 lines the substrate pocket. Lys-219 and Thr-247 together coordinate FMN. 248–249 (NT) is a binding site for substrate. FMN is bound by residues Gly-270, Gly-299, and 320-321 (YS).

This sequence belongs to the dihydroorotate dehydrogenase family. Type 2 subfamily. As to quaternary structure, monomer. FMN is required as a cofactor.

Its subcellular location is the cell membrane. It catalyses the reaction (S)-dihydroorotate + a quinone = orotate + a quinol. It functions in the pathway pyrimidine metabolism; UMP biosynthesis via de novo pathway; orotate from (S)-dihydroorotate (quinone route): step 1/1. Catalyzes the conversion of dihydroorotate to orotate with quinone as electron acceptor. This chain is Dihydroorotate dehydrogenase (quinone) (pyrD), found in Pasteurella multocida (strain Pm70).